Reading from the N-terminus, the 116-residue chain is Large ribosomal subunit protein uL24 (116 aa).

The protein belongs to the universal ribosomal protein uL24 family. As to quaternary structure, part of the 50S ribosomal subunit.

One of two assembly initiator proteins, it binds directly to the 5'-end of the 23S rRNA, where it nucleates assembly of the 50S subunit. In terms of biological role, one of the proteins that surrounds the polypeptide exit tunnel on the outside of the subunit. This Protochlamydia amoebophila (strain UWE25) protein is Large ribosomal subunit protein uL24.